The chain runs to 551 residues: Formate--tetrahydrofolate ligase (551 aa).

Position 65-72 (65-72 (TPAGEGKT)) interacts with ATP.

The protein belongs to the formate--tetrahydrofolate ligase family.

The catalysed reaction is (6S)-5,6,7,8-tetrahydrofolate + formate + ATP = (6R)-10-formyltetrahydrofolate + ADP + phosphate. Its pathway is one-carbon metabolism; tetrahydrofolate interconversion. The sequence is that of Formate--tetrahydrofolate ligase from Thermosipho africanus (strain TCF52B).